A 142-amino-acid chain; its full sequence is Succinate dehydrogenase subunit 6, mitochondrial (142 aa).

In terms of assembly, component of complex II composed of eight subunits in plants: four classical SDH subunits SDH1, SDH2, SDH3 and SDH4 (a flavoprotein (FP), an iron-sulfur protein (IP), and a cytochrome b composed of a large and a small subunit.), as well as four subunits unknown in mitochondria from bacteria and heterotrophic eukaryotes.

The protein resides in the mitochondrion inner membrane. It functions in the pathway carbohydrate metabolism; tricarboxylic acid cycle. The protein is Succinate dehydrogenase subunit 6, mitochondrial of Oryza sativa subsp. japonica (Rice).